The sequence spans 201 residues: Recombination protein RecR (201 aa).

Residues 57–72 (CQVCYSLSDNDICDIC) form a C4-type zinc finger. In terms of domain architecture, Toprim spans 80 to 177 (NKICIVESYP…RITRITYGIS (98 aa)).

Belongs to the RecR family.

In terms of biological role, may play a role in DNA repair. It seems to be involved in an RecBC-independent recombinational process of DNA repair. It may act with RecF and RecO. The sequence is that of Recombination protein RecR from Brachyspira hyodysenteriae (strain ATCC 49526 / WA1).